We begin with the raw amino-acid sequence, 98 residues long: Putative protein adenylyltransferase MJ0126 (98 aa).

The GSX(10)DXD motif signature appears at 31–45 (GSYARNEQTETSDID). The Mg(2+) site is built by Asp-43, Asp-45, and Asp-75.

This sequence belongs to the MntA antitoxin family. As to quaternary structure, probably forms a complex with cognate toxin MJ0125. The cofactor is Mg(2+).

The enzyme catalyses L-tyrosyl-[protein] + ATP = O-(5'-adenylyl)-L-tyrosyl-[protein] + diphosphate. The catalysed reaction is O-(5'-adenylyl)-L-tyrosyl-[protein] + ATP = O-[5'-(adenylyl-(5'-&gt;3')-adenylyl)]-L-tyrosyl-[protein] + diphosphate. Its function is as follows. Probable antitoxin component of a putative type VII toxin-antitoxin (TA) system. Neutralizes cognate toxic MJ0125 by di-AMPylation. This chain is Putative protein adenylyltransferase MJ0126, found in Methanocaldococcus jannaschii (strain ATCC 43067 / DSM 2661 / JAL-1 / JCM 10045 / NBRC 100440) (Methanococcus jannaschii).